We begin with the raw amino-acid sequence, 628 residues long: (+)-alpha pinene synthase 1, chloroplastic (628 aa).

Mg(2+) is bound by residues Asp379, Asp383, and Asp531. The short motif at Asp379–Asp383 is the DDXXD motif element.

The protein belongs to the terpene synthase family. Tpsd subfamily. Mg(2+) serves as cofactor. Requires Mn(2+) as cofactor.

The protein localises to the plastid. The protein resides in the chloroplast. The enzyme catalyses (2E)-geranyl diphosphate = (1R,5R)-alpha-pinene + diphosphate. Its pathway is terpene metabolism; oleoresin biosynthesis. The protein operates within secondary metabolite biosynthesis; terpenoid biosynthesis. In terms of biological role, monoterpene synthase (TPS) involved in the biosynthesis of monoterpene natural products included in conifer oleoresin secretions and volatile emissions; these compounds contribute to biotic and abiotic stress defense against herbivores and pathogens. Catalyzes the conversion of (2E)-geranyl diphosphate (GPP) to (+)-alpha-pinene. The protein is (+)-alpha pinene synthase 1, chloroplastic of Pinus contorta (Shore pine).